The primary structure comprises 197 residues: Wadjet protein JetB (197 aa).

Component of antiplasmid transformation system Wadjet type I, composed of JetA, JetB, JetC and JetD. Expression of Wadjet type I in B.subtilis (strain BEST7003) reduces the transformation efficiency of plasmid pHCMC05. In Bacillus cereus (strain Q1), this protein is Wadjet protein JetB.